The sequence spans 423 residues: Gamma-glutamyl phosphate reductase (423 aa).

This sequence belongs to the gamma-glutamyl phosphate reductase family.

The protein resides in the cytoplasm. The enzyme catalyses L-glutamate 5-semialdehyde + phosphate + NADP(+) = L-glutamyl 5-phosphate + NADPH + H(+). The protein operates within amino-acid biosynthesis; L-proline biosynthesis; L-glutamate 5-semialdehyde from L-glutamate: step 2/2. Catalyzes the NADPH-dependent reduction of L-glutamate 5-phosphate into L-glutamate 5-semialdehyde and phosphate. The product spontaneously undergoes cyclization to form 1-pyrroline-5-carboxylate. In Pseudomonas fluorescens (strain Pf0-1), this protein is Gamma-glutamyl phosphate reductase.